The following is a 238-amino-acid chain: MRPSGRSTSQVRPITITRNFTAHAEGSVLVEFGDTKVICTASVEENVPRWLKGKGQGWVTAEYGMLPRATHTRNRREASSGKQGGRTMEIQRLIARSLRAAVDLEALGEQMITVDCDVIQADGGTRTASITGAMVALVDAVNSMIEKGTLKKSPIKGMVAAVSVGIYKGEAICDLEYLEDSAAETDMNVVMTEEGKMIEIQGTAEGEAFSHEELLAMLALAKDGIADIVTMQKQALES.

Phosphate-binding positions include Arg86 and 124-126 (GTR).

It belongs to the RNase PH family. As to quaternary structure, homohexameric ring arranged as a trimer of dimers.

The catalysed reaction is tRNA(n+1) + phosphate = tRNA(n) + a ribonucleoside 5'-diphosphate. In terms of biological role, phosphorolytic 3'-5' exoribonuclease that plays an important role in tRNA 3'-end maturation. Removes nucleotide residues following the 3'-CCA terminus of tRNAs; can also add nucleotides to the ends of RNA molecules by using nucleoside diphosphates as substrates, but this may not be physiologically important. Probably plays a role in initiation of 16S rRNA degradation (leading to ribosome degradation) during starvation. The chain is Ribonuclease PH from Photobacterium profundum (strain SS9).